Reading from the N-terminus, the 2371-residue chain is NBAS subunit of NRZ tethering complex (2371 aa).

Residues 1–1035 are interaction with USE1; sequence MAAPESGPAL…KTEATTKLHD (1035 aa). WD repeat units lie at residues 130 to 169 and 316 to 355; these read DPKP…LFVI and QEQD…QQGE. A phosphoserine mark is found at Ser473 and Ser475. Residues 1036–2371 are interaction with ZW10 and RINT1; sequence MVDQLEQILS…TALRAAQHWV (1336 aa). Lys1057 bears the N6-acetyllysine mark.

Component of the NRZ complex composed of NBAS, ZW10 and RINT1/TIP20L; NRZ associates with SNAREs STX18, USE1, BNIP1/SEC20L and SEC22B (the assembly has been described as syntaxin 18 complex); links NRZ to SNARE USE1. Broadly expressed, with highest levels in heart and skeletal muscle, and lowest levels in liver, small intestine and thymus. Well expressed in retinal ganglion cells, epidermal skin cells, and leukocytes. Up-regulated together with N-myc in some neuroblastoma cell lines.

It localises to the cytoplasm. The protein resides in the endoplasmic reticulum. It is found in the endoplasmic reticulum membrane. In terms of biological role, involved in Golgi-to-endoplasmic reticulum (ER) retrograde transport; the function is proposed to depend on its association in the NRZ complex which is believed to play a role in SNARE assembly at the ER. Required for normal embryonic development. May play a role in the nonsense-mediated decay pathway of mRNAs containing premature stop codons. This is NBAS subunit of NRZ tethering complex from Homo sapiens (Human).